Here is a 301-residue protein sequence, read N- to C-terminus: uncharacterized protein (301 aa).

This is an uncharacterized protein from Escherichia coli (strain K12).